A 171-amino-acid polypeptide reads, in one-letter code: AN1-type zinc finger protein 2A (171 aa).

AN1-type zinc fingers lie at residues 4-52 (PDLG…KKDV) and 94-142 (KVFT…SSAS). Cysteine 10, cysteine 15, cysteine 25, cysteine 28, cysteine 33, histidine 36, histidine 42, cysteine 44, cysteine 100, cysteine 105, cysteine 115, cysteine 118, cysteine 123, histidine 126, histidine 132, and cysteine 134 together coordinate Zn(2+). Positions 134–171 (CQAGSSSASRGRTSTSRAAEQKPSGVSWLAQRLRRTVK) are disordered. Low complexity predominate over residues 136–151 (AGSSSASRGRTSTSRA).

It is found in the cytoplasm. The protein resides in the nucleus. The protein is AN1-type zinc finger protein 2A (Zfand2a) of Mus musculus (Mouse).